The primary structure comprises 338 residues: Ketol-acid reductoisomerase (NADP(+)) (338 aa).

Residues 1–181 (MKVFYDNDAD…GGTRAGVIET (181 aa)) form the KARI N-terminal Rossmann domain. Residues 24 to 27 (YGSQ), R47, S50, S52, and 82 to 85 (DEGQ) each bind NADP(+). H107 is an active-site residue. G133 is an NADP(+) binding site. The KARI C-terminal knotted domain maps to 182 to 327 (SFREETETDL…SKLRSMMTWI (146 aa)). Mg(2+)-binding residues include D190, E194, E226, and E230. S251 contributes to the substrate binding site.

It belongs to the ketol-acid reductoisomerase family. Requires Mg(2+) as cofactor.

The enzyme catalyses (2R)-2,3-dihydroxy-3-methylbutanoate + NADP(+) = (2S)-2-acetolactate + NADPH + H(+). It catalyses the reaction (2R,3R)-2,3-dihydroxy-3-methylpentanoate + NADP(+) = (S)-2-ethyl-2-hydroxy-3-oxobutanoate + NADPH + H(+). Its pathway is amino-acid biosynthesis; L-isoleucine biosynthesis; L-isoleucine from 2-oxobutanoate: step 2/4. It functions in the pathway amino-acid biosynthesis; L-valine biosynthesis; L-valine from pyruvate: step 2/4. Its function is as follows. Involved in the biosynthesis of branched-chain amino acids (BCAA). Catalyzes an alkyl-migration followed by a ketol-acid reduction of (S)-2-acetolactate (S2AL) to yield (R)-2,3-dihydroxy-isovalerate. In the isomerase reaction, S2AL is rearranged via a Mg-dependent methyl migration to produce 3-hydroxy-3-methyl-2-ketobutyrate (HMKB). In the reductase reaction, this 2-ketoacid undergoes a metal-dependent reduction by NADPH to yield (R)-2,3-dihydroxy-isovalerate. The sequence is that of Ketol-acid reductoisomerase (NADP(+)) from Acidithiobacillus ferrooxidans (strain ATCC 23270 / DSM 14882 / CIP 104768 / NCIMB 8455) (Ferrobacillus ferrooxidans (strain ATCC 23270)).